The chain runs to 165 residues: Large ribosomal subunit protein uL11A (165 aa).

N,N-dimethylproline; by NTM1 is present on proline 2. N6,N6,N6-trimethyllysine; by RKM2 is present on residues lysine 4 and lysine 11. Phosphoserine is present on residues serine 25 and serine 38. The residue at position 67 (arginine 67) is an N5-methylarginine; by RMT2. Glycyl lysine isopeptide (Lys-Gly) (interchain with G-Cter in ubiquitin) cross-links involve residues lysine 130 and lysine 146.

The protein belongs to the universal ribosomal protein uL11 family. In terms of assembly, component of the large ribosomal subunit (LSU). Mature yeast ribosomes consist of a small (40S) and a large (60S) subunit. The 40S small subunit contains 1 molecule of ribosomal RNA (18S rRNA) and 33 different proteins (encoded by 57 genes). The large 60S subunit contains 3 rRNA molecules (25S, 5.8S and 5S rRNA) and 46 different proteins (encoded by 81 genes). Post-translationally, it appears that the main modified species for L12 contains 6 methyl groups, 2 on Pro-2, 3 on Lys-4 and 1 on Arg-67. Although not reproduced with a second method, methylation at Lys-11 cannot be ruled out.

It localises to the cytoplasm. Component of the ribosome, a large ribonucleoprotein complex responsible for the synthesis of proteins in the cell. The small ribosomal subunit (SSU) binds messenger RNAs (mRNAs) and translates the encoded message by selecting cognate aminoacyl-transfer RNA (tRNA) molecules. The large subunit (LSU) contains the ribosomal catalytic site termed the peptidyl transferase center (PTC), which catalyzes the formation of peptide bonds, thereby polymerizing the amino acids delivered by tRNAs into a polypeptide chain. The nascent polypeptides leave the ribosome through a tunnel in the LSU and interact with protein factors that function in enzymatic processing, targeting, and the membrane insertion of nascent chains at the exit of the ribosomal tunnel. The polypeptide is Large ribosomal subunit protein uL11A (Saccharomyces cerevisiae (strain ATCC 204508 / S288c) (Baker's yeast)).